The chain runs to 306 residues: Acetyl-coenzyme A carboxylase carboxyl transferase subunit beta (306 aa).

Residues 27 to 296 (LWHKCPSCEA…PRFVAPVIEP (270 aa)) form the CoA carboxyltransferase N-terminal domain. 4 residues coordinate Zn(2+): Cys-31, Cys-34, Cys-50, and Cys-53. A C4-type zinc finger spans residues 31–53 (CPSCEAVLYRPELEKTLDVCPKC).

It belongs to the AccD/PCCB family. In terms of assembly, acetyl-CoA carboxylase is a heterohexamer composed of biotin carboxyl carrier protein (AccB), biotin carboxylase (AccC) and two subunits each of ACCase subunit alpha (AccA) and ACCase subunit beta (AccD). It depends on Zn(2+) as a cofactor.

Its subcellular location is the cytoplasm. The catalysed reaction is N(6)-carboxybiotinyl-L-lysyl-[protein] + acetyl-CoA = N(6)-biotinyl-L-lysyl-[protein] + malonyl-CoA. It functions in the pathway lipid metabolism; malonyl-CoA biosynthesis; malonyl-CoA from acetyl-CoA: step 1/1. Functionally, component of the acetyl coenzyme A carboxylase (ACC) complex. Biotin carboxylase (BC) catalyzes the carboxylation of biotin on its carrier protein (BCCP) and then the CO(2) group is transferred by the transcarboxylase to acetyl-CoA to form malonyl-CoA. The protein is Acetyl-coenzyme A carboxylase carboxyl transferase subunit beta of Pseudomonas savastanoi pv. phaseolicola (strain 1448A / Race 6) (Pseudomonas syringae pv. phaseolicola (strain 1448A / Race 6)).